The sequence spans 145 residues: Synaptojanin-2-binding protein (145 aa).

Topologically, residues 1 to 117 are cytoplasmic; sequence MNGRVDYLVT…GHRGEGDPSG (117 aa). The region spanning 13 to 100 is the PDZ domain; the sequence is EINLTRGPSG…AVSLRVQHRL (88 aa). The chain crosses the membrane as a helical span at residues 118-138; it reads IPIFMVLVPVFALTMVAAWAF. The Mitochondrial intermembrane segment spans residues 139 to 145; sequence MRYRQQL.

Binds (via the PDZ domain) to isoform 2A of SYNJ2 (via the unique motif in the C-terminus). Interacts (via C-terminus) with RALBP1. Interacts (via PDZ domain) with ACVR2A (via C-terminus) and ACVR2B (via C-terminus). Forms a ternary complex with ACVR2A and RALBP1. Interacts with MAPK12. Interacts with DLL1; enhances DLL1 protein stability, and promotes notch signaling in endothelial cells.

Its subcellular location is the mitochondrion outer membrane. In terms of biological role, regulates endocytosis of activin type 2 receptor kinases through the Ral/RALBP1-dependent pathway and may be involved in suppression of activin-induced signal transduction. The protein is Synaptojanin-2-binding protein (SYNJ2BP) of Homo sapiens (Human).